The chain runs to 188 residues: Elongation factor P (188 aa).

The protein belongs to the elongation factor P family.

The protein resides in the cytoplasm. It functions in the pathway protein biosynthesis; polypeptide chain elongation. Functionally, involved in peptide bond synthesis. Stimulates efficient translation and peptide-bond synthesis on native or reconstituted 70S ribosomes in vitro. Probably functions indirectly by altering the affinity of the ribosome for aminoacyl-tRNA, thus increasing their reactivity as acceptors for peptidyl transferase. This chain is Elongation factor P, found in Leptospira biflexa serovar Patoc (strain Patoc 1 / Ames).